The chain runs to 191 residues: Fe/S biogenesis protein NfuA (191 aa).

Positions 149 and 152 each coordinate [4Fe-4S] cluster.

This sequence belongs to the NfuA family. Homodimer. The cofactor is [4Fe-4S] cluster.

Its function is as follows. Involved in iron-sulfur cluster biogenesis. Binds a 4Fe-4S cluster, can transfer this cluster to apoproteins, and thereby intervenes in the maturation of Fe/S proteins. Could also act as a scaffold/chaperone for damaged Fe/S proteins. This Salmonella paratyphi A (strain ATCC 9150 / SARB42) protein is Fe/S biogenesis protein NfuA.